The chain runs to 290 residues: Shikimate dehydrogenase (NADP(+)) (290 aa).

Residues 20–22 (SLS) and T67 contribute to the shikimate site. The Proton acceptor role is filled by K71. N92 and D107 together coordinate shikimate. Residues 130–134 (GAGGA) and L227 contribute to the NADP(+) site. Y229 lines the shikimate pocket. G250 serves as a coordination point for NADP(+).

The protein belongs to the shikimate dehydrogenase family. In terms of assembly, homodimer.

It catalyses the reaction shikimate + NADP(+) = 3-dehydroshikimate + NADPH + H(+). The protein operates within metabolic intermediate biosynthesis; chorismate biosynthesis; chorismate from D-erythrose 4-phosphate and phosphoenolpyruvate: step 4/7. Involved in the biosynthesis of the chorismate, which leads to the biosynthesis of aromatic amino acids. Catalyzes the reversible NADPH linked reduction of 3-dehydroshikimate (DHSA) to yield shikimate (SA). The sequence is that of Shikimate dehydrogenase (NADP(+)) from Syntrophomonas wolfei subsp. wolfei (strain DSM 2245B / Goettingen).